We begin with the raw amino-acid sequence, 301 residues long: Nucleotide-binding protein MAB_2783c (301 aa).

24-31 (GLSGAGRG) contributes to the ATP binding site. 75 to 78 (DVRS) is a GTP binding site.

It belongs to the RapZ-like family.

Displays ATPase and GTPase activities. The protein is Nucleotide-binding protein MAB_2783c of Mycobacteroides abscessus (strain ATCC 19977 / DSM 44196 / CCUG 20993 / CIP 104536 / JCM 13569 / NCTC 13031 / TMC 1543 / L948) (Mycobacterium abscessus).